A 366-amino-acid chain; its full sequence is D-alanine--D-alanine ligase (366 aa).

Residues 140-346 (KALFAQSDLP…YGELLSRLVD (207 aa)) enclose the ATP-grasp domain. An ATP-binding site is contributed by 173-228 (EDRLGYPCFVKPANMGSSVGISKATNRAELVAAFDDAVRYDRKLIVEKGINVREIE). Mg(2+) contacts are provided by Asp-299, Glu-313, and Asn-315.

The protein belongs to the D-alanine--D-alanine ligase family. Mg(2+) serves as cofactor. Mn(2+) is required as a cofactor.

The protein resides in the cytoplasm. It catalyses the reaction 2 D-alanine + ATP = D-alanyl-D-alanine + ADP + phosphate + H(+). It participates in cell wall biogenesis; peptidoglycan biosynthesis. Cell wall formation. The sequence is that of D-alanine--D-alanine ligase from Heliobacterium modesticaldum (strain ATCC 51547 / Ice1).